The following is a 589-amino-acid chain: ATP-dependent lipid A-core flippase (589 aa).

Helical transmembrane passes span 33–53 (VLAI…AWII), 70–90 (LWVP…TFAS), 148–168 (VVVL…MTYL), 170–190 (GWLV…VTAA), 262–282 (LGAV…VILE), and 283–303 (TISP…LPPL). The ABC transmembrane type-1 domain maps to 33–315 (VLAIVCMVLA…VIGVNAEIQK (283 aa)). Positions 347 to 583 (IEFDRVAFRY…NGHYASLHRV (237 aa)) constitute an ABC transporter domain. 381 to 388 (GRSGSGKT) lines the ATP pocket.

The protein belongs to the ABC transporter superfamily. Lipid exporter (TC 3.A.1.106) family. Homodimer.

It is found in the cell inner membrane. It catalyses the reaction ATP + H2O + lipid A-core oligosaccharideSide 1 = ADP + phosphate + lipid A-core oligosaccharideSide 2.. Functionally, involved in lipopolysaccharide (LPS) biosynthesis. Translocates lipid A-core from the inner to the outer leaflet of the inner membrane. Transmembrane domains (TMD) form a pore in the inner membrane and the ATP-binding domain (NBD) is responsible for energy generation. This Alkalilimnicola ehrlichii (strain ATCC BAA-1101 / DSM 17681 / MLHE-1) protein is ATP-dependent lipid A-core flippase.